The sequence spans 200 residues: Octanoyltransferase (200 aa).

Residues 27–200 enclose the BPL/LPL catalytic domain; sequence GAEDDQLWLV…WAELFSARWR (174 aa). Residues 66–73, 134–136, and 147–149 contribute to the substrate site; these read RGGQITYH, SLG, and GIA. Cys165 functions as the Acyl-thioester intermediate in the catalytic mechanism.

It belongs to the LipB family.

It is found in the cytoplasm. It catalyses the reaction octanoyl-[ACP] + L-lysyl-[protein] = N(6)-octanoyl-L-lysyl-[protein] + holo-[ACP] + H(+). It functions in the pathway protein modification; protein lipoylation via endogenous pathway; protein N(6)-(lipoyl)lysine from octanoyl-[acyl-carrier-protein]: step 1/2. Its function is as follows. Catalyzes the transfer of endogenously produced octanoic acid from octanoyl-acyl-carrier-protein onto the lipoyl domains of lipoate-dependent enzymes. Lipoyl-ACP can also act as a substrate although octanoyl-ACP is likely to be the physiological substrate. The protein is Octanoyltransferase of Dichelobacter nodosus (strain VCS1703A).